The sequence spans 189 residues: MQGFFWKTLLVVALCGTSSSLAHRPLSYGEALELALSVYNSKAGEESLFRLLEAVPQPEWDPLSEGSQQLNFTIKETVCQVEEERPLEECGFQEDGVVLECTGYYFFGETPPVVVLTCVPVGGVEEEEEDEEEQKAEVEKDEEKEDEEKDRPKRVKRFKKFFKKLKNNVKKRVKKFFRKPRVIGVTIPF.

The signal sequence occupies residues 1–22; that stretch reads MQGFFWKTLLVVALCGTSSSLA. Residues 23 to 155 constitute a propeptide that is removed on maturation; it reads HRPLSYGEAL…DEEKDRPKRV (133 aa). 2 disulfide bridges follow: C79/C90 and C101/C118. The span at 125 to 148 shows a compositional bias: acidic residues; it reads EEEEEDEEEQKAEVEKDEEKEDEE. Residues 125–152 are disordered; the sequence is EEEEEDEEEQKAEVEKDEEKEDEEKDRP.

This sequence belongs to the cathelicidin family. In terms of tissue distribution, expressed by the venom gland.

The protein localises to the secreted. Its subcellular location is the target cell membrane. Functionally, potent antimicrobial peptide against Gram-negative and Gram-positive bacteria. Adopts an amphipathic alpha helical conformation, that may allow to partition into the target membrane. Low hemolytic activities have been observed on mammalian cells. The polypeptide is Lutzicidin (Bothrops lutzi (Sertao lancehead)).